Here is a 662-residue protein sequence, read N- to C-terminus: Chaperone protein HtpG (662 aa).

The interval 1–352 (MSKQTLSFQA…SADLPLNVSR (352 aa)) is a; substrate-binding. Positions 353–594 (ELLQESRDVR…GDGMSTQLAR (242 aa)) are b. A disordered region spans residues 382 to 402 (HDRHDSPAPQPAEGADRVSDV). The segment at 595-662 (LLKQAGQQAP…YVKRVNALLV (68 aa)) is c.

This sequence belongs to the heat shock protein 90 family. As to quaternary structure, homodimer.

It localises to the cytoplasm. In terms of biological role, molecular chaperone. Has ATPase activity. The protein is Chaperone protein HtpG of Verminephrobacter eiseniae (strain EF01-2).